A 138-amino-acid polypeptide reads, in one-letter code: MALMPKRVKHRKSQRGRIKGNATRGNTVVFGDYGIQSLDAGWIKATTIEAGRIAAQQYVRGQGKLYIRIFPDKSVTSTPLETRMGKGKGEPDFWAAVVKPGTILYELSGVTEQQAKVCFARLASKMPVKVRFVERRSA.

The span at 1–18 shows a compositional bias: basic residues; sequence MALMPKRVKHRKSQRGRI. Positions 1–21 are disordered; the sequence is MALMPKRVKHRKSQRGRIKGN.

This sequence belongs to the universal ribosomal protein uL16 family. Part of the 50S ribosomal subunit.

Binds 23S rRNA and is also seen to make contacts with the A and possibly P site tRNAs. The protein is Large ribosomal subunit protein uL16 of Rhodopirellula baltica (strain DSM 10527 / NCIMB 13988 / SH1).